A 305-amino-acid chain; its full sequence is Heme A synthase (305 aa).

The Cytoplasmic segment spans residues 1–6 (MKKFLK). A helical transmembrane segment spans residues 7 to 27 (VWSVLTIICMTVVVFGGALVT). Residues 28 to 63 (KTGSADGCGNSWPLCNGQLVRLTDVTPEKLIEFMHR) lie on the Extracellular side of the membrane. The cysteines at positions 35 and 42 are disulfide-linked. Residue Glu59 is part of the active site. Residue His62 coordinates heme o. Residues 64–84 (MTTGISSIFVIVLAICAWIYM) traverse the membrane as a helical segment. At 85–92 (KNRRETKP) the chain is on the cytoplasmic side. Residues 93–113 (LAIIAVLFLIIQALMGMAAVV) form a helical membrane-spanning segment. Topologically, residues 114–122 (WGQNPYIMA) are extracellular. A helical transmembrane segment spans residues 123 to 143 (LHFGISIICYASIVLLALMIF). Heme o is bound at residue His124. Topologically, residues 144–160 (EVDRKFDARNLVMGTKL) are cytoplasmic. A helical transmembrane segment spans residues 161–181 (RVNIYALTIYTYLAVYTGALV). The Extracellular segment spans residues 182–212 (RHEKASMAVPVWPFENGHFIMPTSVQDYVQY). The helical transmembrane segment at 213–233 (FHRLAAFILIVWLLYVTWLVF) threads the bilayer. His214 is a heme b binding site. Residues 234 to 240 (RDYRRYR) are Cytoplasmic-facing. The helical transmembrane segment at 241-261 (VLTFSMVLSLVFIALQAVTGA) threads the bilayer. Residues 262 to 271 (LSVYTGVNLY) are Extracellular-facing. A helical transmembrane segment spans residues 272-292 (IALAHSLIITMLFALLCYLCL). Heme b is bound at residue His276. Over 293 to 305 (LASRSKSNRLRIK) the chain is Cytoplasmic.

Belongs to the COX15/CtaA family. Type 1 subfamily. In terms of assembly, interacts with CtaB. The cofactor is heme b.

The protein resides in the cell membrane. The enzyme catalyses Fe(II)-heme o + 2 A + H2O = Fe(II)-heme a + 2 AH2. The protein operates within porphyrin-containing compound metabolism; heme A biosynthesis; heme A from heme O: step 1/1. Catalyzes the conversion of heme O to heme A by two successive hydroxylations of the methyl group at C8. The first hydroxylation forms heme I, the second hydroxylation results in an unstable dihydroxymethyl group, which spontaneously dehydrates, resulting in the formyl group of heme A. The protein is Heme A synthase of Listeria monocytogenes serovar 1/2a (strain ATCC BAA-679 / EGD-e).